A 193-amino-acid chain; its full sequence is Orotate phosphoribosyltransferase (193 aa).

5-phospho-alpha-D-ribose 1-diphosphate-binding positions include R107, K108, K111, H113, and E133–S141. Orotate contacts are provided by T137 and R165.

It belongs to the purine/pyrimidine phosphoribosyltransferase family. PyrE subfamily. As to quaternary structure, homodimer. The cofactor is Mg(2+).

The enzyme catalyses orotidine 5'-phosphate + diphosphate = orotate + 5-phospho-alpha-D-ribose 1-diphosphate. It functions in the pathway pyrimidine metabolism; UMP biosynthesis via de novo pathway; UMP from orotate: step 1/2. In terms of biological role, catalyzes the transfer of a ribosyl phosphate group from 5-phosphoribose 1-diphosphate to orotate, leading to the formation of orotidine monophosphate (OMP). This is Orotate phosphoribosyltransferase from Rhodopirellula baltica (strain DSM 10527 / NCIMB 13988 / SH1).